The following is a 350-amino-acid chain: Putative D-xylulose reductase (350 aa).

3 residues coordinate Zn(2+): Cys43, His68, and Glu154.

This sequence belongs to the zinc-containing alcohol dehydrogenase family. The cofactor is Zn(2+).

The catalysed reaction is xylitol + NAD(+) = D-xylulose + NADH + H(+). This is Putative D-xylulose reductase from Agrobacterium fabrum (strain C58 / ATCC 33970) (Agrobacterium tumefaciens (strain C58)).